We begin with the raw amino-acid sequence, 291 residues long: Methionine aminopeptidase (291 aa).

H118 is a substrate binding site. 3 residues coordinate a divalent metal cation: D135, D146, and H209. H216 is a substrate binding site. E241 and E273 together coordinate a divalent metal cation.

It belongs to the peptidase M24A family. Methionine aminopeptidase type 1 subfamily. Monomer. The cofactor is Co(2+). It depends on Zn(2+) as a cofactor. Mn(2+) serves as cofactor. Requires Fe(2+) as cofactor.

The enzyme catalyses Release of N-terminal amino acids, preferentially methionine, from peptides and arylamides.. In terms of biological role, removes the N-terminal methionine from nascent proteins. The N-terminal methionine is often cleaved when the second residue in the primary sequence is small and uncharged (Met-Ala-, Cys, Gly, Pro, Ser, Thr, or Val). Requires deformylation of the N(alpha)-formylated initiator methionine before it can be hydrolyzed. The polypeptide is Methionine aminopeptidase (Chlamydia muridarum (strain MoPn / Nigg)).